The primary structure comprises 156 residues: Ribosomal RNA large subunit methyltransferase H (156 aa).

S-adenosyl-L-methionine-binding positions include L73, G104, and 123–128 (LSPLTL).

This sequence belongs to the RNA methyltransferase RlmH family. As to quaternary structure, homodimer.

Its subcellular location is the cytoplasm. It carries out the reaction pseudouridine(1915) in 23S rRNA + S-adenosyl-L-methionine = N(3)-methylpseudouridine(1915) in 23S rRNA + S-adenosyl-L-homocysteine + H(+). In terms of biological role, specifically methylates the pseudouridine at position 1915 (m3Psi1915) in 23S rRNA. The sequence is that of Ribosomal RNA large subunit methyltransferase H from Aliivibrio fischeri (strain ATCC 700601 / ES114) (Vibrio fischeri).